Consider the following 686-residue polypeptide: DNA ligase 1 (686 aa).

NAD(+) contacts are provided by residues 35–39, 84–85, and glutamate 119; these read DFEYD and SL. Lysine 121 serves as the catalytic N6-AMP-lysine intermediate. Residues arginine 142, glutamate 177, lysine 293, and lysine 317 each coordinate NAD(+). Zn(2+) contacts are provided by cysteine 411, cysteine 414, cysteine 429, and cysteine 434. The region spanning 602–686 is the BRCT domain; it reads RVGEQLAGLT…LAEKGAPPLP (85 aa).

This sequence belongs to the NAD-dependent DNA ligase family. LigA subfamily. Mg(2+) serves as cofactor. The cofactor is Mn(2+).

The catalysed reaction is NAD(+) + (deoxyribonucleotide)n-3'-hydroxyl + 5'-phospho-(deoxyribonucleotide)m = (deoxyribonucleotide)n+m + AMP + beta-nicotinamide D-nucleotide.. DNA ligase that catalyzes the formation of phosphodiester linkages between 5'-phosphoryl and 3'-hydroxyl groups in double-stranded DNA using NAD as a coenzyme and as the energy source for the reaction. It is essential for DNA replication and repair of damaged DNA. The protein is DNA ligase 1 of Deinococcus deserti (strain DSM 17065 / CIP 109153 / LMG 22923 / VCD115).